A 141-amino-acid polypeptide reads, in one-letter code: Guanyl-specific ribonuclease Sa3 (141 aa).

Residues 1 to 36 (MRIPPRLVALAGAAAVAATLIAGPVAAAAPASHAVA) constitute a signal peptide (or 43). The cysteines at positions 52 and 141 are disulfide-linked. Glutamate 99 acts as the Proton acceptor in catalysis. Histidine 130 acts as the Proton donor in catalysis.

Belongs to the ribonuclease N1/T1 family.

It localises to the secreted. It catalyses the reaction [RNA] containing guanosine + H2O = an [RNA fragment]-3'-guanosine-3'-phosphate + a 5'-hydroxy-ribonucleotide-3'-[RNA fragment].. The sequence is that of Guanyl-specific ribonuclease Sa3 (rnaSA3) from Kitasatospora aureofaciens (Streptomyces aureofaciens).